A 39-amino-acid chain; its full sequence is Photosystem II reaction center protein J (39 aa).

The chain crosses the membrane as a helical span at residues 9–29; sequence LWIIATFGGIAALTVVGLFIY.

This sequence belongs to the PsbJ family. As to quaternary structure, PSII is composed of 1 copy each of membrane proteins PsbA, PsbB, PsbC, PsbD, PsbE, PsbF, PsbH, PsbI, PsbJ, PsbK, PsbL, PsbM, PsbT, PsbX, PsbY, PsbZ, Psb30/Ycf12, at least 3 peripheral proteins of the oxygen-evolving complex and a large number of cofactors. It forms dimeric complexes.

The protein localises to the plastid. Its subcellular location is the chloroplast thylakoid membrane. Functionally, one of the components of the core complex of photosystem II (PSII). PSII is a light-driven water:plastoquinone oxidoreductase that uses light energy to abstract electrons from H(2)O, generating O(2) and a proton gradient subsequently used for ATP formation. It consists of a core antenna complex that captures photons, and an electron transfer chain that converts photonic excitation into a charge separation. The chain is Photosystem II reaction center protein J from Guillardia theta (Cryptophyte).